Consider the following 342-residue polypeptide: RNA 3'-terminal phosphate cyclase (342 aa).

ATP contacts are provided by residues Gln-103 and 283–287; that span reads YLADQ. The Tele-AMP-histidine intermediate role is filled by His-308.

It belongs to the RNA 3'-terminal cyclase family. Type 1 subfamily.

It localises to the cytoplasm. The catalysed reaction is a 3'-end 3'-phospho-ribonucleotide-RNA + ATP = a 3'-end 2',3'-cyclophospho-ribonucleotide-RNA + AMP + diphosphate. Catalyzes the conversion of 3'-phosphate to a 2',3'-cyclic phosphodiester at the end of RNA. The mechanism of action of the enzyme occurs in 3 steps: (A) adenylation of the enzyme by ATP; (B) transfer of adenylate to an RNA-N3'P to produce RNA-N3'PP5'A; (C) and attack of the adjacent 2'-hydroxyl on the 3'-phosphorus in the diester linkage to produce the cyclic end product. The biological role of this enzyme is unknown but it is likely to function in some aspects of cellular RNA processing. This is RNA 3'-terminal phosphate cyclase (rtcA) from Escherichia coli O157:H7.